A 326-amino-acid polypeptide reads, in one-letter code: DNA-directed RNA polymerase subunit alpha (326 aa).

An alpha N-terminal domain (alpha-NTD) region spans residues 1–231 (MQSNSLLKPR…DQLSVFADLE (231 aa)). Positions 245 to 326 (IDPVLLRPVD…WPPAGLEKLG (82 aa)) are alpha C-terminal domain (alpha-CTD).

This sequence belongs to the RNA polymerase alpha chain family. Homodimer. The RNAP catalytic core consists of 2 alpha, 1 beta, 1 beta' and 1 omega subunit. When a sigma factor is associated with the core the holoenzyme is formed, which can initiate transcription.

The catalysed reaction is RNA(n) + a ribonucleoside 5'-triphosphate = RNA(n+1) + diphosphate. Its function is as follows. DNA-dependent RNA polymerase catalyzes the transcription of DNA into RNA using the four ribonucleoside triphosphates as substrates. The sequence is that of DNA-directed RNA polymerase subunit alpha from Aromatoleum aromaticum (strain DSM 19018 / LMG 30748 / EbN1) (Azoarcus sp. (strain EbN1)).